A 361-amino-acid chain; its full sequence is tRNA N6-adenosine threonylcarbamoyltransferase (361 aa).

Fe cation contacts are provided by His110 and His114. Residues 132–136, Asp165, Gly178, Asp182, and Asn289 each bind substrate; that span reads LVSGG. Position 317 (Asp317) interacts with Fe cation.

The protein belongs to the KAE1 / TsaD family. It depends on Fe(2+) as a cofactor.

The protein localises to the cytoplasm. The enzyme catalyses L-threonylcarbamoyladenylate + adenosine(37) in tRNA = N(6)-L-threonylcarbamoyladenosine(37) in tRNA + AMP + H(+). Functionally, required for the formation of a threonylcarbamoyl group on adenosine at position 37 (t(6)A37) in tRNAs that read codons beginning with adenine. Is involved in the transfer of the threonylcarbamoyl moiety of threonylcarbamoyl-AMP (TC-AMP) to the N6 group of A37, together with TsaE and TsaB. TsaD likely plays a direct catalytic role in this reaction. The sequence is that of tRNA N6-adenosine threonylcarbamoyltransferase from Nitratidesulfovibrio vulgaris (strain ATCC 29579 / DSM 644 / CCUG 34227 / NCIMB 8303 / VKM B-1760 / Hildenborough) (Desulfovibrio vulgaris).